The following is a 293-amino-acid chain: Pantothenate synthetase (293 aa).

30-37 contributes to the ATP binding site; it reads MGYLHKGH. His37 acts as the Proton donor in catalysis. Position 61 (Gln61) interacts with (R)-pantoate. Gln61 contacts beta-alanine. An ATP-binding site is contributed by 147–150; the sequence is GEKD. Position 153 (Gln153) interacts with (R)-pantoate. ATP contacts are provided by residues Val176 and 184-187; that span reads CSSR.

Belongs to the pantothenate synthetase family. As to quaternary structure, homodimer.

It is found in the cytoplasm. It carries out the reaction (R)-pantoate + beta-alanine + ATP = (R)-pantothenate + AMP + diphosphate + H(+). It functions in the pathway cofactor biosynthesis; (R)-pantothenate biosynthesis; (R)-pantothenate from (R)-pantoate and beta-alanine: step 1/1. Functionally, catalyzes the condensation of pantoate with beta-alanine in an ATP-dependent reaction via a pantoyl-adenylate intermediate. In Brucella melitensis biotype 2 (strain ATCC 23457), this protein is Pantothenate synthetase.